The chain runs to 156 residues: Small ribosomal subunit protein uS7 (156 aa).

It belongs to the universal ribosomal protein uS7 family. In terms of assembly, part of the 30S ribosomal subunit. Contacts proteins S9 and S11.

One of the primary rRNA binding proteins, it binds directly to 16S rRNA where it nucleates assembly of the head domain of the 30S subunit. Is located at the subunit interface close to the decoding center, probably blocks exit of the E-site tRNA. The chain is Small ribosomal subunit protein uS7 from Parvibaculum lavamentivorans (strain DS-1 / DSM 13023 / NCIMB 13966).